The primary structure comprises 610 residues: ABC transporter ATP-binding protein/permease wht-3 (610 aa).

Positions 42–277 (VKTRKKLFSK…FADCGHPIPK (236 aa)) constitute an ABC transporter domain. 74–81 (GASGAGKT) contacts ATP. Transmembrane regions (helical) follow at residues 396 to 416 (ALYF…MTFM), 446 to 466 (LPLF…MIGL), 477 to 497 (ILIS…LACL), 503 to 523 (LAIA…GLYG), and 584 to 604 (VIGL…ALFI).

The protein belongs to the ABC transporter superfamily. ABCG family. Eye pigment precursor importer (TC 3.A.1.204) subfamily.

The protein localises to the membrane. Required for efficient RNA interference (RNAi) of pop-1 indicating a role in the germline development. This is ABC transporter ATP-binding protein/permease wht-3 (wht-3) from Caenorhabditis elegans.